The primary structure comprises 100 residues: RxLR effector protein SFI8 (100 aa).

The N-terminal stretch at 1-22 (MRSILYAVLAFAVLARSSAVAA) is a signal peptide. A RxLR-dEER motif is present at residues 43 to 57 (RSLRVEAQEVIQSGR). The short motif at 78–82 (KPDIK) is the Calmodulin-binding motif element.

This sequence belongs to the RxLR effector family. In terms of assembly, interacts with the host calmodulin.

It localises to the secreted. Its subcellular location is the host nucleus. The protein resides in the host cytoplasm. Its function is as follows. Effector that suppresses flg22-induced post-translational MAP kinase activation both tomato and Arabidopsis. The perception of highly conserved pathogen- or microbe-associated molecular patterns (PAMPs/MAMPs), such as flg22, triggers converging signaling pathways recruiting MAP kinase cascades and inducing transcriptional re-programming, yielding a generic antimicrobial response. Associates with calmodulin to interfere with plant defense-associated calcium signaling in hosts. The sequence is that of RxLR effector protein SFI8 from Phytophthora infestans (strain T30-4) (Potato late blight agent).